The following is a 181-amino-acid chain: Bifunctional protein PyrR (181 aa).

The PRPP-binding signature appears at 101 to 113 (VIVVDDVLYTGRT).

The protein belongs to the purine/pyrimidine phosphoribosyltransferase family. PyrR subfamily. In terms of assembly, homodimer and homohexamer; in equilibrium.

It carries out the reaction UMP + diphosphate = 5-phospho-alpha-D-ribose 1-diphosphate + uracil. Functionally, regulates transcriptional attenuation of the pyrimidine nucleotide (pyr) operon by binding in a uridine-dependent manner to specific sites on pyr mRNA. This disrupts an antiterminator hairpin in the RNA and favors formation of a downstream transcription terminator, leading to a reduced expression of downstream genes. In terms of biological role, also displays a weak uracil phosphoribosyltransferase activity which is not physiologically significant. This is Bifunctional protein PyrR from Bacillus velezensis (strain DSM 23117 / BGSC 10A6 / LMG 26770 / FZB42) (Bacillus amyloliquefaciens subsp. plantarum).